The sequence spans 76 residues: ATP synthase subunit 9, mitochondrial (76 aa).

The next 2 helical transmembrane spans lie at 14–34 (MATL…VALI) and 52–72 (ILGF…SFLL).

This sequence belongs to the ATPase C chain family. In terms of assembly, F-type ATPases have 2 components, CF(1) - the catalytic core - and CF(0) - the membrane proton channel. CF(1) has five subunits: alpha(3), beta(3), gamma(1), delta(1), epsilon(1). CF(0) has three main subunits: a, b and c.

The protein localises to the mitochondrion membrane. Mitochondrial membrane ATP synthase (F(1)F(0) ATP synthase or Complex V) produces ATP from ADP in the presence of a proton gradient across the membrane which is generated by electron transport complexes of the respiratory chain. F-type ATPases consist of two structural domains, F(1) - containing the extramembraneous catalytic core and F(0) - containing the membrane proton channel, linked together by a central stalk and a peripheral stalk. During catalysis, ATP synthesis in the catalytic domain of F(1) is coupled via a rotary mechanism of the central stalk subunits to proton translocation. Part of the complex F(0) domain. A homomeric c-ring of probably 10 subunits is part of the complex rotary element. This is ATP synthase subunit 9, mitochondrial (ATP9) from Debaryomyces hansenii (strain ATCC 36239 / CBS 767 / BCRC 21394 / JCM 1990 / NBRC 0083 / IGC 2968) (Yeast).